We begin with the raw amino-acid sequence, 464 residues long: Glutamate--tRNA ligase (464 aa).

Positions 9-19 (PSPTGYLHIGG) match the 'HIGH' region motif. The short motif at 242–246 (KISKR) is the 'KMSKS' region element. Position 245 (Lys245) interacts with ATP.

The protein belongs to the class-I aminoacyl-tRNA synthetase family. Glutamate--tRNA ligase type 1 subfamily. As to quaternary structure, monomer.

The protein localises to the cytoplasm. It catalyses the reaction tRNA(Glu) + L-glutamate + ATP = L-glutamyl-tRNA(Glu) + AMP + diphosphate. Functionally, catalyzes the attachment of glutamate to tRNA(Glu) in a two-step reaction: glutamate is first activated by ATP to form Glu-AMP and then transferred to the acceptor end of tRNA(Glu). The polypeptide is Glutamate--tRNA ligase (Neisseria meningitidis serogroup C (strain 053442)).